A 293-amino-acid chain; its full sequence is Probable porphobilinogen deaminase (293 aa).

Cys-233 bears the S-(dipyrrolylmethanemethyl)cysteine mark.

Belongs to the HMBS family. It depends on dipyrromethane as a cofactor.

It catalyses the reaction 4 porphobilinogen + H2O = hydroxymethylbilane + 4 NH4(+). It participates in porphyrin-containing compound metabolism; protoporphyrin-IX biosynthesis; coproporphyrinogen-III from 5-aminolevulinate: step 2/4. Its function is as follows. Tetrapolymerization of the monopyrrole PBG into the hydroxymethylbilane pre-uroporphyrinogen in several discrete steps. The sequence is that of Probable porphobilinogen deaminase from Saccharolobus islandicus (strain Y.G.57.14 / Yellowstone #1) (Sulfolobus islandicus).